The following is a 250-amino-acid chain: Triosephosphate isomerase, cytosolic (250 aa).

2 residues coordinate substrate: asparagine 1 and lysine 3. Histidine 87 functions as the Electrophile in the catalytic mechanism. Residue glutamate 160 is the Proton acceptor of the active site.

This sequence belongs to the triosephosphate isomerase family. In terms of assembly, homodimer.

It localises to the cytoplasm. It carries out the reaction D-glyceraldehyde 3-phosphate = dihydroxyacetone phosphate. Its pathway is carbohydrate biosynthesis; gluconeogenesis. The protein operates within carbohydrate degradation; glycolysis; D-glyceraldehyde 3-phosphate from glycerone phosphate: step 1/1. The polypeptide is Triosephosphate isomerase, cytosolic (TPI1) (Gracilaria gracilis (Red alga)).